The following is a 132-amino-acid chain: Small ribosomal subunit protein eS12 (132 aa).

The protein belongs to the eukaryotic ribosomal protein eS12 family.

The protein resides in the cytoplasm. This is Small ribosomal subunit protein eS12 (rps12) from Xenopus laevis (African clawed frog).